A 463-amino-acid polypeptide reads, in one-letter code: Sodium-coupled neutral amino acid transporter 7 (463 aa).

Serine 28 carries the post-translational modification Phosphoserine. 11 helical membrane-spanning segments follow: residues 56-76 (AVFIVVNACLGAGLLNFPAAF), 82-102 (VAAGIALQMGMLVFIISGLVI), 130-150 (LCEIAIAVYTFGTCIAFLIII), 179-199 (FTISLTAFLFILPLSIPKEIG), 206-226 (SLSVVGTWYVTAIVIIKYIWP), 240-260 (ASWMAVFNAMPTICFGFQCHV), 283-303 (AAMVIALAVYMGTGICGFLTF), 320-340 (VAVAVARAFIILSVLTSYPIL), 372-392 (VLQTLVWFLLTLLLALFIPDI), 396-416 (ISVIGGLAACFIFIFPGLCLI), and 429-449 (ASWWALVSYGVLLVTLGAFIF).

The protein belongs to the amino acid/polyamine transporter 2 family. Interacts with the mTORC1 complex; this interaction mediates the recruitment of mTORC1 to the lysosome and its subsequent activation.

Its subcellular location is the lysosome membrane. The protein resides in the cell projection. The protein localises to the axon. The enzyme catalyses L-asparagine(in) + Na(+)(in) = L-asparagine(out) + Na(+)(out). It carries out the reaction L-glutamine(in) + Na(+)(in) = L-glutamine(out) + Na(+)(out). In terms of biological role, symporter that selectively cotransports sodium ions and amino acids, such as L-glutamine and L-asparagine from the lysosome into the cytoplasm and may participates in mTORC1 activation. The transport activity requires an acidic lysosomal lumen. In Rattus norvegicus (Rat), this protein is Sodium-coupled neutral amino acid transporter 7.